Reading from the N-terminus, the 128-residue chain is Aspartate 1-decarboxylase (128 aa).

The active-site Schiff-base intermediate with substrate; via pyruvic acid is the Ser25. A Pyruvic acid (Ser) modification is found at Ser25. Residue Thr57 coordinates substrate. Tyr58 serves as the catalytic Proton donor. Gly73 to Ala75 contacts substrate.

This sequence belongs to the PanD family. In terms of assembly, heterooctamer of four alpha and four beta subunits. It depends on pyruvate as a cofactor. Post-translationally, is synthesized initially as an inactive proenzyme, which is activated by self-cleavage at a specific serine bond to produce a beta-subunit with a hydroxyl group at its C-terminus and an alpha-subunit with a pyruvoyl group at its N-terminus.

The protein resides in the cytoplasm. It catalyses the reaction L-aspartate + H(+) = beta-alanine + CO2. The protein operates within cofactor biosynthesis; (R)-pantothenate biosynthesis; beta-alanine from L-aspartate: step 1/1. Catalyzes the pyruvoyl-dependent decarboxylation of aspartate to produce beta-alanine. This chain is Aspartate 1-decarboxylase, found in Caldicellulosiruptor bescii (strain ATCC BAA-1888 / DSM 6725 / KCTC 15123 / Z-1320) (Anaerocellum thermophilum).